The sequence spans 314 residues: NAD-dependent protein lipoamidase sirtuin-4, mitochondrial (314 aa).

The transit peptide at 1-28 (MKMSFALTFRSAKGRWIANPSQPCSKAS) directs the protein to the mitochondrion. The Deacetylase sirtuin-type domain occupies 37 to 314 (PPLDPEKVKE…GELLPLIDPC (278 aa)). Residues 62–82 (GAGI…VGLY) and 143–146 (QNVD) each bind NAD(+). The active-site Proton acceptor is the His161. Residues Cys169, Cys172, Cys220, and Cys223 each contribute to the Zn(2+) site. NAD(+)-binding positions include 260–262 (GSS), 286–288 (NIG), and Cys304.

The protein belongs to the sirtuin family. Class II subfamily. Interacts with GLUD1, IDE and SLC25A5. Interacts with DLAT and PDHX. Interacts with MCCC1 (via the biotin carboxylation domain). Interacts with PCCA and PC. Zn(2+) serves as cofactor. Detected in vascular smooth muscle and striated muscle. Detected in insulin-producing beta-cells in pancreas islets of Langerhans (at protein level). Widely expressed. Weakly expressed in leukocytes and fetal thymus.

It is found in the mitochondrion matrix. It carries out the reaction N(6)-[(R)-lipoyl]-L-lysyl-[protein] + NAD(+) + H2O = 2''-O-lipoyl-ADP-D-ribose + nicotinamide + L-lysyl-[protein]. The catalysed reaction is N(6)-biotinyl-L-lysyl-[protein] + NAD(+) + H2O = 2''-O-biotinyl-ADP-D-ribose + nicotinamide + L-lysyl-[protein]. The enzyme catalyses N(6)-acetyl-L-lysyl-[protein] + NAD(+) + H2O = 2''-O-acetyl-ADP-D-ribose + nicotinamide + L-lysyl-[protein]. It catalyses the reaction L-cysteinyl-[protein] + NAD(+) = S-(ADP-D-ribosyl)-L-cysteinyl-[protein] + nicotinamide + H(+). Functionally, acts as a NAD-dependent protein lipoamidase, biotinylase, deacetylase and ADP-ribosyl transferase. Catalyzes more efficiently removal of lipoyl- and biotinyl- than acetyl-lysine modifications. Inhibits the pyruvate dehydrogenase complex (PDH) activity via the enzymatic hydrolysis of the lipoamide cofactor from the E2 component, DLAT, in a phosphorylation-independent manner. Catalyzes the transfer of ADP-ribosyl groups onto target proteins, including mitochondrial GLUD1, inhibiting GLUD1 enzyme activity. Acts as a negative regulator of mitochondrial glutamine metabolism by mediating mono ADP-ribosylation of GLUD1: expressed in response to DNA damage and negatively regulates anaplerosis by inhibiting GLUD1, leading to block metabolism of glutamine into tricarboxylic acid cycle and promoting cell cycle arrest. In response to mTORC1 signal, SIRT4 expression is repressed, promoting anaplerosis and cell proliferation. Acts as a tumor suppressor. Also acts as a NAD-dependent protein deacetylase: mediates deacetylation of 'Lys-471' of MLYCD, inhibiting its activity, thereby acting as a regulator of lipid homeostasis. Does not seem to deacetylate PC. Controls fatty acid oxidation by inhibiting PPARA transcriptional activation. Impairs SIRT1-PPARA interaction probably through the regulation of NAD(+) levels. Down-regulates insulin secretion. This is NAD-dependent protein lipoamidase sirtuin-4, mitochondrial from Homo sapiens (Human).